A 196-amino-acid chain; its full sequence is HTH-type transcriptional regulator BetI (196 aa).

The HTH tetR-type domain maps to 8–68 (PVRREQLIRA…AAMRQILREL (61 aa)). Positions 31–50 (TVATIAKKAGLSSGIVAHYF) form a DNA-binding region, H-T-H motif.

It participates in amine and polyamine biosynthesis; betaine biosynthesis via choline pathway [regulation]. Repressor involved in the biosynthesis of the osmoprotectant glycine betaine. It represses transcription of the choline transporter BetT and the genes of BetAB involved in the synthesis of glycine betaine. This Stenotrophomonas maltophilia (strain R551-3) protein is HTH-type transcriptional regulator BetI.